The primary structure comprises 620 residues: Glutathione-regulated potassium-efflux system protein KefC (620 aa).

12 helical membrane passes run 4–24 (HTLV…PIAV), 26–46 (LGLG…LWGL), 54–74 (SILH…GLEL), 90–110 (GALQ…LLGL), 114–134 (VAEL…MQAM), 149–169 (FAVL…IPLL), 178–198 (MGAF…VVLL), 218–238 (VFSA…EEVG), 270–290 (GLLL…GTLI), 294–314 (LRIV…LWLI), 327–347 (WFAV…GAAQ), and 359–379 (SLTL…VILN). The region spanning 399–518 (QPRVIIAGFG…AGVEKPERET (120 aa)) is the RCK N-terminal domain. The segment at 597 to 620 (GWQGTEEGKHTGNMADEPETKPSS) is disordered.

Belongs to the monovalent cation:proton antiporter 2 (CPA2) transporter (TC 2.A.37) family. KefC subfamily. As to quaternary structure, homodimer. Interacts with the regulatory subunit KefF.

The protein localises to the cell inner membrane. Functionally, pore-forming subunit of a potassium efflux system that confers protection against electrophiles. Catalyzes K(+)/H(+) antiport. This is Glutathione-regulated potassium-efflux system protein KefC from Shigella flexneri serotype 5b (strain 8401).